The following is a 538-amino-acid chain: Cryptic outer membrane porin BglH (538 aa).

A signal peptide spans 1-25 (MFRRNLITSAILLMAPLAFSAQSLA). The interval 52–82 (KDEEKKKYTPATVNRSVSTNDQGYAANPFPT) is disordered. Residues 62 to 73 (ATVNRSVSTNDQ) are compositionally biased toward polar residues.

It belongs to the porin LamB (TC 1.B.3) family. In terms of assembly, homomonomer; no physical evidence of a homotrimer has been found, however conductance experiments suggest it may be a homotrimer. The monomer probably consists of 18 antiparallel beta-strands.

Its subcellular location is the cell outer membrane. Functionally, part of a cryptic operon that is poorly expressed in vivo. May be an ancestral sugar porin with a broad carbohydrate specificity; it binds aromatic beta-D-glucosides such as arbutin and salicin, but with low affinity compared to the binding of maltooligosaccharides to the LamB porin. This chain is Cryptic outer membrane porin BglH (bglH), found in Escherichia coli (strain K12).